The primary structure comprises 1356 residues: Serine/threonine-protein kinase PSK1 (1356 aa).

Position 10 is a phosphoserine (Ser10). The interval 20–115 (KHAITHKGTS…SVDSTVSSPL (96 aa)) is disordered. Polar residues-rich tracts occupy residues 26 to 37 (KGTSSSVASLQT) and 54 to 64 (YDTSLSDVSTP). The span at 99-115 (LPSTASSSVDSTVSSPL) shows a compositional bias: low complexity. Phosphoserine occurs at positions 192, 202, 255, 286, and 327. The PAS 1 domain maps to 450-518 (RTFTSTKNSA…VLHKLLSTEG (69 aa)). A compositionally biased stretch (low complexity) spans 592-608 (PTLSSSSTLSLPKMASS). Disordered stretches follow at residues 592-612 (PTLS…PTGS) and 627-660 (YTKP…PVRS). The region spanning 738–807 (LKLKIHSLPY…FINDKYPALD (70 aa)) is the PAS 2 domain. Residue Ser926 is modified to Phosphoserine. Residues 948–972 (DSRAHSQSTLSEQEQVPLENDKDSG) are disordered. Residues 952-961 (HSQSTLSEQE) show a composition bias toward polar residues. A phosphoserine mark is found at Ser1018, Ser1023, Ser1035, and Ser1055. Residues 1021-1032 (TESLADSKSSGK) show a composition bias toward polar residues. The segment at 1021–1066 (TESLADSKSSGKGLSPLEEEKLIDENATENGLAGSPKDEDGIIMTN) is disordered. Position 1079 is a phosphothreonine (Thr1079). Residues 1096–1354 (FVSLQKMGEG…IDDINNDKWL (259 aa)) form the Protein kinase domain. ATP is bound by residues 1102–1110 (MGEGAYGKV) and Lys1125. The active-site Proton acceptor is Asp1230.

It belongs to the protein kinase superfamily. Ser/Thr protein kinase family.

Its subcellular location is the cytoplasm. It carries out the reaction L-seryl-[protein] + ATP = O-phospho-L-seryl-[protein] + ADP + H(+). The enzyme catalyses L-threonyl-[protein] + ATP = O-phospho-L-threonyl-[protein] + ADP + H(+). Its function is as follows. Serine/threonine-protein kinase involved in the control of sugar metabolism and translation. Phosphorylates UGP1, which is required for normal glycogen and beta-(1,6)-glucan synthesis. This phosphorylation shifts glucose partitioning toward cell wall glucan synthesis at the expense of glycogen synthesis. The polypeptide is Serine/threonine-protein kinase PSK1 (PSK1) (Saccharomyces cerevisiae (strain ATCC 204508 / S288c) (Baker's yeast)).